Consider the following 906-residue polypeptide: Kinesin-like protein KIN-7G (906 aa).

Residues 26-344 (SVAVAVRFRP…LKFAHRAKHI (319 aa)) form the Kinesin motor domain. An ATP-binding site is contributed by 105–112 (GVTSSGKT). Coiled coils occupy residues 346-385 (IQAT…RTGT), 733-814 (SDEF…GRNQ), and 839-875 (GDMN…LEKE). Residues 803–840 (RLSSELASGRNQRRGSHGPRGARRESHTKRYEPARRGD) form a disordered region. Positions 813 to 823 (NQRRGSHGPRG) are enriched in basic residues. A compositionally biased stretch (basic and acidic residues) spans 824 to 840 (ARRESHTKRYEPARRGD).

Belongs to the TRAFAC class myosin-kinesin ATPase superfamily. Kinesin family. KIN-7 subfamily.

This is Kinesin-like protein KIN-7G from Oryza sativa subsp. japonica (Rice).